Reading from the N-terminus, the 210-residue chain is Thymidylate kinase (210 aa).

Aspartate 17 is a binding site for dGMP. A dTMP-binding site is contributed by aspartate 17. 6 residues coordinate ATP: arginine 18, serine 19, glycine 20, lysine 21, serine 22, and threonine 23. DTMP contacts are provided by arginine 47, phenylalanine 74, arginine 78, arginine 99, and tyrosine 107. Positions 74, 78, 99, 107, 108, and 153 each coordinate dGMP. The LID stretch occupies residues glutamine 143–lysine 155. ATP is bound at residue arginine 182.

This sequence belongs to the thymidylate kinase family. Homodimer. Binds two dTMP molecules per dimer. Binds only one dTGP molecule per dimer.

It carries out the reaction dTMP + ATP = dTDP + ADP. It catalyses the reaction dGMP + ATP = dGDP + ADP. The protein operates within pyrimidine metabolism; dTTP biosynthesis. Inhibited by deoxyguanosine (dG), deoxythymidine (dT) and azidothymidine (AZT). Functionally, catalyzes the phosphorylation of thymidine monophosphate (dTMP) to thymidine diphosphate (dTDP), the immediate precursor for the DNA building block dTTP. Can also phosphorylate dGMP and to a lesser extent GMP, dUMP and dIMP. Can use either ATP or dATP as phosphate donors in presence of Mg(2+). The protein is Thymidylate kinase of Plasmodium falciparum (isolate 3D7).